The chain runs to 536 residues: Pre-mRNA 3'-end-processing factor FIP1 (536 aa).

Composition is skewed to basic and acidic residues over residues M1–V10 and V32–L42. Disordered stretches follow at residues M1–V95, V212–P246, and F300–E536. The sufficient for interaction with PAPOLA stretch occupies residues M1–G110. The segment at M1 to P296 is necessary for stimulating PAPOLA activity. Composition is skewed to acidic residues over residues D43 to N54 and T80 to D94. Residues S84, S86, and S88 each carry the phosphoserine modification. Residues K136 to N219 form a sufficient for interaction with CPSF4 region. Over residues F300 to L344 the composition is skewed to pro residues. Phosphotyrosine is present on Y366. The segment covering L374–Q390 has biased composition (polar residues). The interval S383–E536 is sufficient for interaction with CPSF1 and CSTF3. Over residues Y394–S434 the composition is skewed to basic and acidic residues. The interval R397 to D432 is arg/Asp/Glu-rich domain. S434 carries the post-translational modification Phosphoserine. Position 436 is a phosphothreonine (T436). Phosphoserine is present on residues S438 and S442. Positions D443–H470 are enriched in basic and acidic residues. A compositionally biased stretch (basic residues) spans K484 to R493. A Phosphoserine modification is found at S496. The segment covering H502 to R512 has biased composition (basic residues).

The protein belongs to the FIP1 family. As to quaternary structure, component of the cleavage and polyadenylation specificity factor (CPSF) complex, composed of CPSF1, CPSF2, CPSF3, CPSF4 and FIP1L1. Found in a complex with CPSF1, FIP1L1 and PAPOLA. Interacts with CPSF1, CPSF4, CSTF2 and CSTF3. Interacts with AHCYL1 (when phosphorylated); the interaction is direct and associates AHCYL1 with the CPSF complex and RNA. Interacts with PAPOLA; the interaction seems to be increased by the interaction with AHCYL1. Interacts with NUDT21/CPSF5; this interaction occurs in a RNA sequence-specific manner. Interacts (preferentially via unphosphorylated form and Arg/Glu/Asp-rich domain) with CPSF6 (via Arg/Ser-rich domain); this interaction mediates, at least in part, the interaction between the CFIm and CPSF complexes and may be inhibited by CPSF6 hyper-phosphorylation. Interacts (preferentially via unphosphorylated form and Arg/Asp/Glu-rich domain) with CPSF7 (via Arg/Ser-rich domain); this interaction mediates, at least in part, the interaction between the CFIm and CPSF complexes and may be inhibited by CPSF7 hyper-phosphorylation.

It is found in the nucleus. Functionally, component of the cleavage and polyadenylation specificity factor (CPSF) complex that plays a key role in pre-mRNA 3'-end formation, recognizing the AAUAAA signal sequence and interacting with poly(A) polymerase and other factors to bring about cleavage and poly(A) addition. FIP1L1 contributes to poly(A) site recognition and stimulates poly(A) addition. Binds to U-rich RNA sequence elements surrounding the poly(A) site. May act to tether poly(A) polymerase to the CPSF complex. The chain is Pre-mRNA 3'-end-processing factor FIP1 (Fip1l1) from Rattus norvegicus (Rat).